Here is a 267-residue protein sequence, read N- to C-terminus: MTKTKIIGILNVTPDSFSDGGKYNSVDKAIARAKEMIDEGVDIIDVGGVSTRPGHTEVSLEEEMERVVPVVEQLVKLDVQISVDTYRSEVAEACLKLGATMINDQWAGLYDPKIFDVVSDYNAEIVLMHNGDGQREQPVVEEMLLSLLTQANKAEMAGIEKGNIWLDPGIGFAKSRSEEKEVMARLDELVATEYPVLLATSRKRFIKEMIGKETTPAERDEATAATTVYGIMKGIQAVRVHNVDLNVKLAQSIDFLKENEHERHHLS.

Residues 1–251 (MTKTKIIGIL…NVDLNVKLAQ (251 aa)) enclose the Pterin-binding domain. Asparagine 11 lines the Mg(2+) pocket. (7,8-dihydropterin-6-yl)methyl diphosphate contacts are provided by residues threonine 51, aspartate 84, asparagine 103, aspartate 167, lysine 203, and 239–241 (RVH).

Belongs to the DHPS family. It depends on Mg(2+) as a cofactor.

It carries out the reaction (7,8-dihydropterin-6-yl)methyl diphosphate + 4-aminobenzoate = 7,8-dihydropteroate + diphosphate. Its pathway is cofactor biosynthesis; tetrahydrofolate biosynthesis; 7,8-dihydrofolate from 2-amino-4-hydroxy-6-hydroxymethyl-7,8-dihydropteridine diphosphate and 4-aminobenzoate: step 1/2. Functionally, catalyzes the condensation of para-aminobenzoate (pABA) with 6-hydroxymethyl-7,8-dihydropterin diphosphate (DHPt-PP) to form 7,8-dihydropteroate (H2Pte), the immediate precursor of folate derivatives. This chain is Dihydropteroate synthase (folP), found in Staphylococcus haemolyticus.